The following is a 419-amino-acid chain: Gamma-glutamyl phosphate reductase (419 aa).

This sequence belongs to the gamma-glutamyl phosphate reductase family.

It is found in the cytoplasm. It carries out the reaction L-glutamate 5-semialdehyde + phosphate + NADP(+) = L-glutamyl 5-phosphate + NADPH + H(+). It functions in the pathway amino-acid biosynthesis; L-proline biosynthesis; L-glutamate 5-semialdehyde from L-glutamate: step 2/2. Functionally, catalyzes the NADPH-dependent reduction of L-glutamate 5-phosphate into L-glutamate 5-semialdehyde and phosphate. The product spontaneously undergoes cyclization to form 1-pyrroline-5-carboxylate. The chain is Gamma-glutamyl phosphate reductase from Mannheimia succiniciproducens (strain KCTC 0769BP / MBEL55E).